Here is a 795-residue protein sequence, read N- to C-terminus: Lon protease (795 aa).

One can recognise a Lon N-terminal domain in the interval 7–213; sequence PQILVVRNQV…KIIGSGIEDL (207 aa). 379-386 is an ATP binding site; sequence GPPGVGKS. The region spanning 615–795 is the Lon proteolytic domain; the sequence is DALPGIVNGM…YKDIYNKIFN (181 aa). Active-site residues include Ser-702 and Lys-745.

The protein belongs to the peptidase S16 family. As to quaternary structure, homohexamer. Organized in a ring with a central cavity.

It localises to the cytoplasm. It carries out the reaction Hydrolysis of proteins in presence of ATP.. Its function is as follows. ATP-dependent serine protease that mediates the selective degradation of mutant and abnormal proteins as well as certain short-lived regulatory proteins. Required for cellular homeostasis and for survival from DNA damage and developmental changes induced by stress. Degrades polypeptides processively to yield small peptide fragments that are 5 to 10 amino acids long. Binds to DNA in a double-stranded, site-specific manner. This chain is Lon protease, found in Mycoplasma pneumoniae (strain ATCC 29342 / M129 / Subtype 1) (Mycoplasmoides pneumoniae).